The sequence spans 333 residues: Tetraacyldisaccharide 4'-kinase (333 aa).

60 to 67 (TVGGTGKT) is an ATP binding site.

It belongs to the LpxK family.

It catalyses the reaction a lipid A disaccharide + ATP = a lipid IVA + ADP + H(+). The protein operates within glycolipid biosynthesis; lipid IV(A) biosynthesis; lipid IV(A) from (3R)-3-hydroxytetradecanoyl-[acyl-carrier-protein] and UDP-N-acetyl-alpha-D-glucosamine: step 6/6. Functionally, transfers the gamma-phosphate of ATP to the 4'-position of a tetraacyldisaccharide 1-phosphate intermediate (termed DS-1-P) to form tetraacyldisaccharide 1,4'-bis-phosphate (lipid IVA). The sequence is that of Tetraacyldisaccharide 4'-kinase from Pseudomonas putida (strain GB-1).